Reading from the N-terminus, the 171-residue chain is uncharacterized protein (171 aa).

The protein to M.jannaschii MJ0417.

This is an uncharacterized protein from Methanocaldococcus jannaschii (strain ATCC 43067 / DSM 2661 / JAL-1 / JCM 10045 / NBRC 100440) (Methanococcus jannaschii).